A 128-amino-acid polypeptide reads, in one-letter code: SH2 domain-containing protein 1A (128 aa).

The SH2 domain maps to 6 to 102 (VYHGKISRET…GIVIPLQYPV (97 aa)). Residues 67-92 (DTAPGVHKRFFRKIKNLISAFQKPDQ) are interaction with FYN SH3 domain. Lys-89 bears the N6-acetyllysine mark. A disordered region spans residues 103-128 (EKKSSARSTQGATGRREDPDVFLKTP). Basic and acidic residues predominate over residues 116-128 (GRREDPDVFLKTP).

As to quaternary structure, interacts with CD84, CD244, LY9, SLAMF1 and FYN. Interacts with NTRK1, NTRK2 and NTRK3.

The protein localises to the cytoplasm. In terms of biological role, cytoplasmic adapter regulating receptors of the signaling lymphocytic activation molecule (SLAM) family such as SLAMF1, CD244, LY9, CD84, SLAMF6 and SLAMF7. In SLAM signaling seems to cooperate with SH2D1B/EAT-2. Initially it has been proposed that association with SLAMF1 prevents SLAMF1 binding to inhibitory effectors including INPP5D/SHIP1 and PTPN11/SHP-2. However, by simultaneous interactions, recruits FYN which subsequently phosphorylates and activates SLAMF1. Positively regulates CD244/2B4- and CD84-mediated natural killer (NK) cell functions. Can also promote CD48-, SLAMF6 -, LY9-, and SLAMF7-mediated NK cell activation. In the context of NK cell-mediated cytotoxicity enhances conjugate formation with target cells. May also regulate the activity of the neurotrophin receptors NTRK1, NTRK2 and NTRK3. The polypeptide is SH2 domain-containing protein 1A (SH2D1A) (Sus scrofa (Pig)).